The following is a 195-amino-acid chain: Guanylate kinase (195 aa).

The region spanning 5 to 183 (GILFVISGPS…ALQKITAIII (179 aa)) is the Guanylate kinase-like domain. 12 to 19 (GPSGVGKG) serves as a coordination point for ATP.

It belongs to the guanylate kinase family.

The protein resides in the cytoplasm. It carries out the reaction GMP + ATP = GDP + ADP. Functionally, essential for recycling GMP and indirectly, cGMP. The sequence is that of Guanylate kinase from Syntrophomonas wolfei subsp. wolfei (strain DSM 2245B / Goettingen).